Here is a 316-residue protein sequence, read N- to C-terminus: 2,3-dihydroxyphenylpropionate/2,3-dihydroxicinnamic acid 1,2-dioxygenase (316 aa).

The active-site Proton donor is the His115. His180 acts as the Proton acceptor in catalysis.

It belongs to the LigB/MhpB extradiol dioxygenase family. As to quaternary structure, homotetramer. It depends on Fe(2+) as a cofactor.

The catalysed reaction is 3-(2,3-dihydroxyphenyl)propanoate + O2 = (2Z,4E)-2-hydroxy-6-oxonona-2,4-dienedioate + H(+). The enzyme catalyses (2E)-3-(2,3-dihydroxyphenyl)prop-2-enoate + O2 = (2Z,4E,7E)-2-hydroxy-6-oxonona-2,4,7-trienedioate + H(+). The protein operates within aromatic compound metabolism; 3-phenylpropanoate degradation. In terms of biological role, catalyzes the non-heme iron(II)-dependent oxidative cleavage of 2,3-dihydroxyphenylpropionic acid and 2,3-dihydroxicinnamic acid into 2-hydroxy-6-ketononadienedioate and 2-hydroxy-6-ketononatrienedioate, respectively. In Rhodococcus rhodochrous, this protein is 2,3-dihydroxyphenylpropionate/2,3-dihydroxicinnamic acid 1,2-dioxygenase.